Consider the following 572-residue polypeptide: Arginine--tRNA ligase (572 aa).

The short motif at 127–137 (ANPTGPLHVGH) is the 'HIGH' region element.

The protein belongs to the class-I aminoacyl-tRNA synthetase family. Monomer.

It is found in the cytoplasm. It carries out the reaction tRNA(Arg) + L-arginine + ATP = L-arginyl-tRNA(Arg) + AMP + diphosphate. The protein is Arginine--tRNA ligase of Vesicomyosocius okutanii subsp. Calyptogena okutanii (strain HA).